A 696-amino-acid chain; its full sequence is Carotenoid dioxygenase carX (696 aa).

Over residues 1–16 (MKFLQQNSFTQTSMSQ) the composition is skewed to polar residues. Residues 1–27 (MKFLQQNSFTQTSMSQPHEDVSPPLRH) form a disordered region. Residues His244, His298, His361, and His642 each coordinate Fe(2+).

The protein belongs to the carotenoid oxygenase family. The cofactor is Fe(2+).

The enzyme catalyses all-trans-beta-carotene + O2 = 2 all-trans-retinal. It participates in carotenoid biosynthesis. In terms of biological role, carotenoid dioxygenase; part of the car gene cluster that mediates the biosynthesis of neurosporaxanthin, a carboxylic apocarotenoid acting as an essential protective pigments and leading to orange pigmentation. CarX mediates the cleavage of beta-carotene produced by carAR into retinal, the rhodopsin's chromophore that is involved in the regulation of the carotenoid biosynthetic pathway via a negative feedback mechanism. It can also convert the synthetic compound beta-apo-8'-carotenal but not C35-apocarotenoids such as the acidic apocarotenoid neurosporaxanthin (C35), as well as its corresponding aldehyde beta-apo-4'-carotenal. In Gibberella fujikuroi (strain CBS 195.34 / IMI 58289 / NRRL A-6831) (Bakanae and foot rot disease fungus), this protein is Carotenoid dioxygenase carX.